A 72-amino-acid chain; its full sequence is MAKEEPIEVEGRVIEPLPNAMFRVELENGHRVLAHISGKMRMHFIKILPGDKVTVELSPYDLTRGRIIYRTK.

The S1-like domain maps to Met-1–Lys-72.

This sequence belongs to the IF-1 family. As to quaternary structure, component of the 30S ribosomal translation pre-initiation complex which assembles on the 30S ribosome in the order IF-2 and IF-3, IF-1 and N-formylmethionyl-tRNA(fMet); mRNA recruitment can occur at any time during PIC assembly.

It localises to the cytoplasm. In terms of biological role, one of the essential components for the initiation of protein synthesis. Stabilizes the binding of IF-2 and IF-3 on the 30S subunit to which N-formylmethionyl-tRNA(fMet) subsequently binds. Helps modulate mRNA selection, yielding the 30S pre-initiation complex (PIC). Upon addition of the 50S ribosomal subunit IF-1, IF-2 and IF-3 are released leaving the mature 70S translation initiation complex. The sequence is that of Translation initiation factor IF-1 from Syntrophus aciditrophicus (strain SB).